The primary structure comprises 279 residues: uncharacterized protein (279 aa).

The disordered stretch occupies residues 136–279 (TSNATEASEK…FTSDSSDEED (144 aa)). Low complexity predominate over residues 228–238 (NNGNGAVYSDS).

This is an uncharacterized protein from Invertebrate iridescent virus 3 (IIV-3).